Reading from the N-terminus, the 49-residue chain is Glycolactin (49 aa).

It belongs to the pancreatic ribonuclease family. Post-translationally, glycosylated. In terms of tissue distribution, milk.

It localises to the secreted. Functionally, manifests poly C-specific RNase activity toward yeast tRNA, elicits a dose-dependent inhibition of cell-free translation, inhibits formation of superoxide ions in vitro and inhibits the hemagglutinating activities of soybean lectin and Ricinus communis agglutinin 120. Inhibits HIV-1 reverse transcriptase. The protein is Glycolactin of Bos taurus (Bovine).